Consider the following 860-residue polypeptide: DNA mismatch repair protein MutS (860 aa).

An ATP-binding site is contributed by 625–632 (GPNMGGKS).

It belongs to the DNA mismatch repair MutS family.

This protein is involved in the repair of mismatches in DNA. It is possible that it carries out the mismatch recognition step. This protein has a weak ATPase activity. This is DNA mismatch repair protein MutS from Aeromonas hydrophila subsp. hydrophila (strain ATCC 7966 / DSM 30187 / BCRC 13018 / CCUG 14551 / JCM 1027 / KCTC 2358 / NCIMB 9240 / NCTC 8049).